Consider the following 361-residue polypeptide: Chorismate synthase (361 aa).

Residues R48 and R54 each coordinate NADP(+). Residues 125–127 (RSS), 238–239 (NA), G278, 293–297 (KPTSS), and R319 each bind FMN.

This sequence belongs to the chorismate synthase family. Homotetramer. FMNH2 serves as cofactor.

It catalyses the reaction 5-O-(1-carboxyvinyl)-3-phosphoshikimate = chorismate + phosphate. It participates in metabolic intermediate biosynthesis; chorismate biosynthesis; chorismate from D-erythrose 4-phosphate and phosphoenolpyruvate: step 7/7. In terms of biological role, catalyzes the anti-1,4-elimination of the C-3 phosphate and the C-6 proR hydrogen from 5-enolpyruvylshikimate-3-phosphate (EPSP) to yield chorismate, which is the branch point compound that serves as the starting substrate for the three terminal pathways of aromatic amino acid biosynthesis. This reaction introduces a second double bond into the aromatic ring system. In Proteus mirabilis (strain HI4320), this protein is Chorismate synthase.